The primary structure comprises 669 residues: Coagulation factor XIII B chain (669 aa).

Positions 1–21 are cleaved as a signal peptide; sequence MMTLRHLPFILLLILSGELYA. 10 consecutive Sushi domains span residues 25-89, 90-149, 152-211, 212-270, 273-330, 335-392, 395-453, 454-517, 523-581, and 582-648; these read QCDF…PRCY, KKCL…SCRK, ETCL…QCNK, LMCS…ICEG, NRCP…KCIE, VACE…ECVE, ENCK…VCLE, PCTI…PMCI, GMCA…SCLE, and PCTL…PKCT. 20 cysteine pairs are disulfide-bonded: cysteine 26–cysteine 77, cysteine 60–cysteine 88, cysteine 92–cysteine 136, cysteine 119–cysteine 147, cysteine 154–cysteine 198, cysteine 181–cysteine 209, cysteine 214–cysteine 256, cysteine 242–cysteine 268, cysteine 275–cysteine 317, cysteine 303–cysteine 328, cysteine 337–cysteine 379, cysteine 365–cysteine 390, cysteine 397–cysteine 440, cysteine 426–cysteine 451, cysteine 455–cysteine 506, cysteine 487–cysteine 516, cysteine 525–cysteine 568, cysteine 554–cysteine 579, cysteine 583–cysteine 637, and cysteine 617–cysteine 647. Residue asparagine 163 is glycosylated (N-linked (GlcNAc...) asparagine). A glycan (N-linked (GlcNAc...) asparagine) is linked at asparagine 546.

In terms of assembly, tetramer of two A chains (F13A1) and two B (F13B) chains. In terms of tissue distribution, predominantly expressed in liver and kidney.

The protein localises to the secreted. In terms of biological role, the B chain of factor XIII is not catalytically active, but is thought to stabilize the A subunits and regulate the rate of transglutaminase formation by thrombin. The sequence is that of Coagulation factor XIII B chain (F13b) from Mus musculus (Mouse).